The primary structure comprises 499 residues: Glutamate--tRNA ligase (499 aa).

The short motif at 12 to 22 (PSPTGHLHIGN) is the 'HIGH' region element. Residues 259–263 (KLSKR) carry the 'KMSKS' region motif. Residue Lys262 coordinates ATP.

The protein belongs to the class-I aminoacyl-tRNA synthetase family. Glutamate--tRNA ligase type 1 subfamily. Monomer.

It localises to the cytoplasm. It carries out the reaction tRNA(Glu) + L-glutamate + ATP = L-glutamyl-tRNA(Glu) + AMP + diphosphate. Its function is as follows. Catalyzes the attachment of glutamate to tRNA(Glu) in a two-step reaction: glutamate is first activated by ATP to form Glu-AMP and then transferred to the acceptor end of tRNA(Glu). The protein is Glutamate--tRNA ligase of Lactobacillus gasseri (strain ATCC 33323 / DSM 20243 / BCRC 14619 / CIP 102991 / JCM 1131 / KCTC 3163 / NCIMB 11718 / NCTC 13722 / AM63).